A 298-amino-acid polypeptide reads, in one-letter code: MENFQKVEKIGEGTYGVVYKAKNKLTGEVVALKKIRLDTETEGVPSTAIREISLLKELNHPNIVKLLDVIHTENKLYLVFEFLHQDLKKFMDASALTGIPLPLIKSYLFQLLQGLAFCHSHRVLHRDLKPQNLLINADGSIKLADFGLARAFGVPVRTYTHEVVTLWYRAPEILLGCKYYSTAVDIWSLGCIFAEMVTRRALFPGDSEIDQLFRIFRTLGTPDEVVWPGVTSMPDYKPSFPKWARQDFSKVVPPLDEDGRSLLSQMLHYDPNKRISAKAALAHPFFQDVTKPVPHLRL.

Position 1 is an N-acetylmethionine (Met-1). The region spanning 4-286 is the Protein kinase domain; sequence FQKVEKIGEG…AKAALAHPFF (283 aa). Lys-6 carries the N6-acetyllysine modification. Position 10-18 (10-18) interacts with ATP; the sequence is IGEGTYGVV. At Thr-14 the chain carries Phosphothreonine. A Phosphotyrosine; by WEE1 modification is found at Tyr-15. A Phosphotyrosine modification is found at Tyr-19. ATP contacts are provided by residues Lys-33, 81–83, and Asp-86; that span reads EFL. The active-site Proton acceptor is Asp-127. Residues 129–132 and Asp-145 contribute to the ATP site; that span reads KPQN. Residues Asn-132 and Asp-145 each contribute to the Mg(2+) site. Thr-160 carries the post-translational modification Phosphothreonine; by CAK and CCRK.

It belongs to the protein kinase superfamily. CMGC Ser/Thr protein kinase family. CDC2/CDKX subfamily. Found in a complex with CABLES1, CCNA1 and CCNE1. Interacts with CABLES1. Interacts with UHRF2. Part of a complex consisting of UHRF2, CDK2 and CCNE1. Interacts with the Speedy/Ringo proteins SPDYA and SPDYC. Interaction with SPDYA promotes kinase activation via a conformation change that alleviates obstruction of the substrate-binding cleft by the T-loop. Found in a complex with both SPDYA and CDKN1B/KIP1. Binds to RB1 and CDK7. Binding to CDKN1A (p21) leads to CDK2/cyclin E inactivation at the G1-S phase DNA damage checkpoint, thereby arresting cells at the G1-S transition during DNA repair. Associated with PTPN6 and beta-catenin/CTNNB1. Interacts with CACUL1. May interact with CEP63. Interacts with ANKRD17. Interacts with CEBPA (when phosphorylated). Forms a ternary complex with CCNA2 and CDKN1B; CDKN1B inhibits the kinase activity of CDK2 through conformational rearrangements. Interacts with cyclins A, B1, B3, D, or E. Interacts with CDK2AP2. Mg(2+) is required as a cofactor. Post-translationally, phosphorylated at Thr-160 by CDK7 in a CAK complex. Phosphorylation at Thr-160 promotes kinase activity, whereas phosphorylation at Tyr-15 by WEE1 reduces slightly kinase activity. Phosphorylated on Thr-14 and Tyr-15 during S and G2 phases before being dephosphorylated by CDC25A. In terms of processing, nitrosylated after treatment with nitric oxide (DETA-NO).

Its subcellular location is the cytoplasm. The protein resides in the cytoskeleton. The protein localises to the microtubule organizing center. It is found in the centrosome. It localises to the nucleus. Its subcellular location is the cajal body. The protein resides in the endosome. The catalysed reaction is L-seryl-[protein] + ATP = O-phospho-L-seryl-[protein] + ADP + H(+). The enzyme catalyses L-threonyl-[protein] + ATP = O-phospho-L-threonyl-[protein] + ADP + H(+). Its activity is regulated as follows. Phosphorylation at Thr-14 or Tyr-15 inactivates the enzyme, while phosphorylation at Thr-160 activates it. Stimulated by MYC. Inactivated by CDKN1A (p21). Functionally, serine/threonine-protein kinase involved in the control of the cell cycle; essential for meiosis, but dispensable for mitosis. Phosphorylates CABLES1, CTNNB1, CDK2AP2, ERCC6, NBN, USP37, p53/TP53, NPM1, CDK7, RB1, BRCA2, MYC, NPAT, EZH2. Triggers duplication of centrosomes and DNA. Acts at the G1-S transition to promote the E2F transcriptional program and the initiation of DNA synthesis, and modulates G2 progression; controls the timing of entry into mitosis/meiosis by controlling the subsequent activation of cyclin B/CDK1 by phosphorylation, and coordinates the activation of cyclin B/CDK1 at the centrosome and in the nucleus. Crucial role in orchestrating a fine balance between cellular proliferation, cell death, and DNA repair in embryonic stem cells (ESCs). Activity of CDK2 is maximal during S phase and G2; activated by interaction with cyclin E during the early stages of DNA synthesis to permit G1-S transition, and subsequently activated by cyclin A2 (cyclin A1 in germ cells) during the late stages of DNA replication to drive the transition from S phase to mitosis, the G2 phase. EZH2 phosphorylation promotes H3K27me3 maintenance and epigenetic gene silencing. Cyclin E/CDK2 prevents oxidative stress-mediated Ras-induced senescence by phosphorylating MYC. Involved in G1-S phase DNA damage checkpoint that prevents cells with damaged DNA from initiating mitosis; regulates homologous recombination-dependent repair by phosphorylating BRCA2, this phosphorylation is low in S phase when recombination is active, but increases as cells progress towards mitosis. In response to DNA damage, double-strand break repair by homologous recombination a reduction of CDK2-mediated BRCA2 phosphorylation. Involved in regulation of telomere repair by mediating phosphorylation of NBN. Phosphorylation of RB1 disturbs its interaction with E2F1. NPM1 phosphorylation by cyclin E/CDK2 promotes its dissociation from unduplicated centrosomes, thus initiating centrosome duplication. Cyclin E/CDK2-mediated phosphorylation of NPAT at G1-S transition and until prophase stimulates the NPAT-mediated activation of histone gene transcription during S phase. Required for vitamin D-mediated growth inhibition by being itself inactivated. Involved in the nitric oxide- (NO) mediated signaling in a nitrosylation/activation-dependent manner. USP37 is activated by phosphorylation and thus triggers G1-S transition. CTNNB1 phosphorylation regulates insulin internalization. Phosphorylates FOXP3 and negatively regulates its transcriptional activity and protein stability. Phosphorylates ERCC6 which is essential for its chromatin remodeling activity at DNA double-strand breaks. Acts as a regulator of the phosphatidylinositol 3-kinase/protein kinase B signal transduction by mediating phosphorylation of the C-terminus of protein kinase B (PKB/AKT1 and PKB/AKT2), promoting its activation. This is Cyclin-dependent kinase 2 (CDK2) from Bos taurus (Bovine).